The chain runs to 182 residues: Isopentenyl-diphosphate Delta-isomerase (182 aa).

Mn(2+) is bound by residues His-25 and His-32. Residues 30–164 (LLHLAFSSWL…PWAFSPWMVM (135 aa)) form the Nudix hydrolase domain. Cys-67 is a catalytic residue. Residue His-69 participates in Mn(2+) binding. Glu-87 contacts Mg(2+). Mn(2+) contacts are provided by Glu-114 and Glu-116. Glu-116 is a catalytic residue.

Belongs to the IPP isomerase type 1 family. In terms of assembly, homodimer. It depends on Mg(2+) as a cofactor. Requires Mn(2+) as cofactor.

The protein localises to the cytoplasm. It carries out the reaction isopentenyl diphosphate = dimethylallyl diphosphate. Its pathway is isoprenoid biosynthesis; dimethylallyl diphosphate biosynthesis; dimethylallyl diphosphate from isopentenyl diphosphate: step 1/1. In terms of biological role, catalyzes the 1,3-allylic rearrangement of the homoallylic substrate isopentenyl (IPP) to its highly electrophilic allylic isomer, dimethylallyl diphosphate (DMAPP). The chain is Isopentenyl-diphosphate Delta-isomerase from Escherichia coli O7:K1 (strain IAI39 / ExPEC).